The chain runs to 354 residues: Galactoside alpha-(1,2)-fucosyltransferase 2 (354 aa).

Topologically, residues 1 to 5 (MASAQ) are cytoplasmic. The chain crosses the membrane as a helical; Signal-anchor for type II membrane protein span at residues 6–26 (VPFSFPLAHFLIFVFVTSTIT). Topologically, residues 27–354 (HLQQRIVKLQ…PADLSPLLKH (328 aa)) are lumenal. Positions 43–68 (LPMTTQMSSGNTESPEMRRDSEQHGN) are disordered. Polar residues predominate over residues 45–56 (MTTQMSSGNTES). The span at 57-68 (PEMRRDSEQHGN) shows a compositional bias: basic and acidic residues. The N-linked (GlcNAc...) asparagine glycan is linked to Asn199.

This sequence belongs to the glycosyltransferase 11 family. As to expression, specifically expressed in gut.

Its subcellular location is the golgi apparatus. The protein resides in the golgi stack membrane. The catalysed reaction is a beta-D-galactosyl-(1-&gt;3)-N-acetyl-beta-D-glucosaminyl derivative + GDP-beta-L-fucose = an alpha-L-Fuc-(1-&gt;2)-beta-D-Gal-(1-&gt;3)-beta-D-GlcNAc derivative + GDP + H(+). It carries out the reaction a beta-D-galactosyl-(1-&gt;4)-N-acetyl-beta-D-glucosaminyl derivative + GDP-beta-L-fucose = an alpha-L-Fuc-(1-&gt;2)-beta-D-Gal-(1-&gt;4)-beta-D-GlcNAc derivative + GDP + H(+). The enzyme catalyses a ganglioside GM1 (d18:1(4E)) + GDP-beta-L-fucose = a ganglioside Fuc-GM1 (d18:1(4E)) + GDP + H(+). It catalyses the reaction a globoside GalGb4Cer (d18:1(4E)) + GDP-beta-L-fucose = a globoside Globo-H (d18:1(4E)) + GDP + H(+). The catalysed reaction is a neolactoside nLc4Cer + GDP-beta-L-fucose = a neolactoside IV(2)-alpha-Fuc-nLc4Cer + GDP + H(+). It carries out the reaction a neolactoside nLc4Cer(d18:1(4E)) + GDP-beta-L-fucose = a neolactoside IV(2)-alpha-Fuc-nLc4Cer(d18:1(4E)) + GDP + H(+). The enzyme catalyses a ganglioside GM1 + GDP-beta-L-fucose = a ganglioside Fuc-GM1 + GDP + H(+). It catalyses the reaction a ganglioside GA1 + GDP-beta-L-fucose = a ganglioside Fuc-GA1 + GDP + H(+). The catalysed reaction is Lc4Cer + GDP-beta-L-fucose = alpha-L-fucosyl-(1-&gt;2)-beta-D-galactosyl-(1-&gt;3)-N-acetyl-beta-D-glucosaminyl-(1-&gt;3)-beta-D-galactosyl-(1-&gt;4)-beta-D-glucosyl-(1&lt;-&gt;1')-ceramide + GDP + H(+). It carries out the reaction a beta-D-Gal-(1-&gt;3)-beta-D-GlcNAc-(1-&gt;3)-beta-D-Gal-(1-&gt;4)-beta-D-Glc-(1&lt;-&gt;1')-Cer(d18:1(4E)) + GDP-beta-L-fucose = alpha-L-fucosyl-(1-&gt;2)- beta-D-galactosyl-(1-&gt;3)-N-acetyl-beta-D-glucosaminyl-(1-&gt;3)-beta-D-galactosyl-(1-&gt;4)-beta-D-glucosyl-(1&lt;-&gt;1')-N-acylsphing-4-enine + GDP + H(+). The enzyme catalyses a ganglioside GD1b + GDP-beta-L-fucose = a ganglioside Fuc-GD1b + GDP + H(+). It catalyses the reaction a lactoside III(4)-a-Fuc-Lc4Cer + GDP-beta-L-fucose = a lactoside IV(2),III(4)-a-[Fuc]2-Lc4Cer + GDP + H(+). The catalysed reaction is beta-D-galactosyl-(1-&gt;3)-N-acetyl-D-galactosamine + GDP-beta-L-fucose = alpha-L-fucosyl-(1-&gt;2)-beta-D-galactosyl-(1-&gt;3)-N-acetyl-D-galactosamine + GDP + H(+). The protein operates within protein modification; protein glycosylation. Functionally, catalyzes the transfer of L-fucose, from a guanosine diphosphate-beta-L-fucose, to the terminal galactose on both O- and N-linked glycans chains of cell surface glycoproteins and glycolipids and the resulting epitope regulates several processes such as cell-cell interaction including host-microbe interaction, cell surface expression and cell proliferation. Preferentially fucosylates gangliosides GA1 and GM1 in the antrum, cecum and colon and in the female reproductive organs. Fucosylated host glycoproteins or glycolipids mediate interaction with intestinal microbiota influencing its composition. Creates a soluble precursor oligosaccharide FuC-alpha ((1,2)Galbeta-) called the H antigen which is an essential substrate for the final step in the soluble ABO blood group antigen synthesis pathway. The protein is Galactoside alpha-(1,2)-fucosyltransferase 2 of Rattus norvegicus (Rat).